A 334-amino-acid chain; its full sequence is Fructose-1,6-bisphosphatase class 1 (334 aa).

4 residues coordinate Mg(2+): E89, D112, L114, and D115. Substrate-binding positions include D115–S118, N208, Y241, and K271. E277 provides a ligand contact to Mg(2+).

Belongs to the FBPase class 1 family. As to quaternary structure, homotetramer. It depends on Mg(2+) as a cofactor.

Its subcellular location is the cytoplasm. The enzyme catalyses beta-D-fructose 1,6-bisphosphate + H2O = beta-D-fructose 6-phosphate + phosphate. It functions in the pathway carbohydrate biosynthesis; gluconeogenesis. The polypeptide is Fructose-1,6-bisphosphatase class 1 (Serratia proteamaculans (strain 568)).